The following is a 152-amino-acid chain: Deoxyuridine 5'-triphosphate nucleotidohydrolase (152 aa).

Residues 71-73 (RSG), N84, 88-90 (LID), and M98 contribute to the substrate site.

It belongs to the dUTPase family. Requires Mg(2+) as cofactor.

It carries out the reaction dUTP + H2O = dUMP + diphosphate + H(+). It participates in pyrimidine metabolism; dUMP biosynthesis; dUMP from dCTP (dUTP route): step 2/2. In terms of biological role, this enzyme is involved in nucleotide metabolism: it produces dUMP, the immediate precursor of thymidine nucleotides and it decreases the intracellular concentration of dUTP so that uracil cannot be incorporated into DNA. In Shewanella piezotolerans (strain WP3 / JCM 13877), this protein is Deoxyuridine 5'-triphosphate nucleotidohydrolase.